The primary structure comprises 493 residues: Glutamate--tRNA ligase (493 aa).

The short motif at Pro10–Thr20 is the 'HIGH' region element. The short motif at Lys251–Arg255 is the 'KMSKS' region element. Lys254 is an ATP binding site.

This sequence belongs to the class-I aminoacyl-tRNA synthetase family. Glutamate--tRNA ligase type 1 subfamily. Monomer.

The protein resides in the cytoplasm. The enzyme catalyses tRNA(Glu) + L-glutamate + ATP = L-glutamyl-tRNA(Glu) + AMP + diphosphate. In terms of biological role, catalyzes the attachment of glutamate to tRNA(Glu) in a two-step reaction: glutamate is first activated by ATP to form Glu-AMP and then transferred to the acceptor end of tRNA(Glu). In Pseudomonas fluorescens (strain Pf0-1), this protein is Glutamate--tRNA ligase.